Reading from the N-terminus, the 154-residue chain is Protein X (154 aa).

The tract at residues 68 to 117 (PCALRFTSARCMETTVNAPRNLPKVLHKRTLGLSTMSTTGIETYFKDCVF) is mitochondrial targeting sequence.

This sequence belongs to the orthohepadnavirus protein X family. In terms of assembly, may form homodimer. May interact with host CEBPA, CFLAR, CREB1, DDB1, E4F1, HBXIP, HSPD1/HSP60, NFKBIA, POLR2E and SMAD4. Interacts with host SMC5-SMC6 complex and induces its degradation. Interacts with host TRPC4AP; leading to prevent ubiquitination of TRPC4AP. Interacts with host PLSCR1; this interaction promotes ubiquitination and degradation of HBx and impairs HBx-mediated cell proliferation. A fraction may be phosphorylated in insect cells and HepG2 cells, a human hepatoblastoma cell line. Phosphorylated in vitro by host protein kinase C or mitogen-activated protein kinase. N-acetylated in insect cells.

It is found in the host cytoplasm. It localises to the host nucleus. The protein localises to the host mitochondrion. Functionally, multifunctional protein that plays a role in silencing host antiviral defenses and promoting viral transcription. Does not seem to be essential for HBV infection. May be directly involved in development of cirrhosis and liver cancer (hepatocellular carcinoma). Most of cytosolic activities involve modulation of cytosolic calcium. The effect on apoptosis is controversial depending on the cell types in which the studies have been conducted. May induce apoptosis by localizing in mitochondria and causing loss of mitochondrial membrane potential. May also modulate apoptosis by binding host CFLAR, a key regulator of the death-inducing signaling complex (DISC). Promotes viral transcription by using the host E3 ubiquitin ligase DDB1 to target the SMC5-SMC6 complex to proteasomal degradation. This host complex would otherwise bind to viral episomal DNA, and prevents its transcription. Moderately stimulates transcription of many different viral and cellular transcription elements. Promoters and enhancers stimulated by HBx contain DNA binding sites for NF-kappa-B, AP-1, AP-2, c-EBP, ATF/CREB, or the calcium-activated factor NF-AT. In Orangutan hepatitis B virus (isolate Somad) (HBVoru), this protein is Protein X.